The following is a 1072-amino-acid chain: Guanylyl cyclase C (1072 aa).

Residues 1–22 form the signal peptide; it reads MTSLLGLAVRLLLFQPTLMFWA. Residues 23 to 429 are Extracellular-facing; sequence SQVRQKCHNG…PNDVPGLGPQ (407 aa). N-linked (GlcNAc...) asparagine glycans are attached at residues asparagine 31, asparagine 74, asparagine 78, asparagine 187, asparagine 194, asparagine 306, and asparagine 401. A helical membrane pass occupies residues 430-453; sequence ILMIAVFTLTGIVVVLLLIALLVL. Over 454–1072 the chain is Cytoplasmic; it reads RKYRRDHELR…NNSDHDSTYF (619 aa). In terms of domain architecture, Protein kinase spans 488–748; that stretch reads LKIDDDRRRD…KIESTLAKIF (261 aa). The 131-residue stretch at 823-953 folds into the Guanylate cyclase domain; sequence TIYFSDIVGF…DTVNTASRME (131 aa).

This sequence belongs to the adenylyl cyclase class-4/guanylyl cyclase family. Homotrimer. Interacts via its C-terminal region with PDZK2. Interacts with the lectin chaperone VIP36. In terms of processing, glycosylation at Asn-74 and/or Asn-78 is required for interaction with VIP36 while glycosylation at Asn-401 modulates ligand-mediated GC-C activation.

The protein resides in the cell membrane. The protein localises to the endoplasmic reticulum membrane. The catalysed reaction is GTP = 3',5'-cyclic GMP + diphosphate. Its function is as follows. Guanylyl cyclase that catalyzes synthesis of cyclic GMP (cGMP) from GTP. Receptor for the E.coli heat-stable enterotoxin; E.coli enterotoxin markedly stimulates the accumulation of cGMP in mammalian cells expressing GUCY2C. The chain is Guanylyl cyclase C (Gucy2c) from Rattus norvegicus (Rat).